Reading from the N-terminus, the 259-residue chain is Expansin-B6 (259 aa).

The N-terminal stretch at 1 to 24 (MASSSHRYFALLALFAVSLKFCYC) is a signal peptide. Asn-26 carries N-linked (GlcNAc...) asparagine glycosylation. The region spanning 52 to 160 (GGACGFAVAN…IRVECLYRRT (109 aa)) is the Expansin-like EG45 domain. 3 disulfide bridges follow: Cys-55–Cys-82, Cys-85–Cys-155, and Cys-90–Cys-96. Residues 173–254 (YYISFVVEYE…NWKPNETYRS (82 aa)) form the Expansin-like CBD domain. N-linked (GlcNAc...) asparagine glycosylation is present at Asn-249.

This sequence belongs to the expansin family. Expansin B subfamily.

The protein resides in the secreted. It localises to the cell wall. It is found in the membrane. Functionally, may cause loosening and extension of plant cell walls by disrupting non-covalent bonding between cellulose microfibrils and matrix glucans. The polypeptide is Expansin-B6 (Arabidopsis thaliana (Mouse-ear cress)).